Here is a 158-residue protein sequence, read N- to C-terminus: MIRRATIVAVGRLRGWAAEGCEDYLRRLRRYFPVEVIEVAEADMNRLGRGEALREEAGRLLRRLPADAHVVALDRKTGRRYGSEELARRRLEPLAVSGRGHVAFVIGGPLGLAPEVLERADERWSFGEITLPHALARVVLLEQLYRAVKILRGERYHW.

Residues L73, G107, and 126–131 (FGEITL) contribute to the S-adenosyl-L-methionine site.

It belongs to the RNA methyltransferase RlmH family. As to quaternary structure, homodimer.

The protein resides in the cytoplasm. The catalysed reaction is pseudouridine(1915) in 23S rRNA + S-adenosyl-L-methionine = N(3)-methylpseudouridine(1915) in 23S rRNA + S-adenosyl-L-homocysteine + H(+). Specifically methylates the pseudouridine at position 1915 (m3Psi1915) in 23S rRNA. This chain is Ribosomal RNA large subunit methyltransferase H, found in Rubrobacter xylanophilus (strain DSM 9941 / JCM 11954 / NBRC 16129 / PRD-1).